Here is a 439-residue protein sequence, read N- to C-terminus: Ribosomal protein uS12 methylthiotransferase RimO (439 aa).

Residues 3–113 (HKVGFVSLGC…VVNAVHQHLP (111 aa)) enclose the MTTase N-terminal domain. [4Fe-4S] cluster-binding residues include Cys12, Cys48, Cys77, Cys144, Cys148, and Cys151. Positions 130 to 367 (LTPRHYAYLK…MQVQAEISRN (238 aa)) constitute a Radical SAM core domain. In terms of domain architecture, TRAM spans 370-436 (KNKIGSTQTV…DYDLYGDLEY (67 aa)).

Belongs to the methylthiotransferase family. RimO subfamily. [4Fe-4S] cluster serves as cofactor.

It is found in the cytoplasm. The catalysed reaction is L-aspartate(89)-[ribosomal protein uS12]-hydrogen + (sulfur carrier)-SH + AH2 + 2 S-adenosyl-L-methionine = 3-methylsulfanyl-L-aspartate(89)-[ribosomal protein uS12]-hydrogen + (sulfur carrier)-H + 5'-deoxyadenosine + L-methionine + A + S-adenosyl-L-homocysteine + 2 H(+). In terms of biological role, catalyzes the methylthiolation of an aspartic acid residue of ribosomal protein uS12. This chain is Ribosomal protein uS12 methylthiotransferase RimO, found in Legionella pneumophila (strain Paris).